Consider the following 449-residue polypeptide: MNPNQKIITIGSICMVIGIVSLMLQIGNIISIWVSHSIQTGNQHQAEPISNTNFLTEKAVASVTLAGNSSLCPISGWAVHSKDNSIRIGSKGDVFVIREPFISCSHLECRTFFLTQGALLNDKHSNGTVKDRSPHRTLMSCPVGEAPSPYNSRFESVAWSASACHDGTSWLTIGISGPDNGAVAVLKYNGIITDTIKSWRNNILRTQESECACVNGSCFTVMTDGPSNGQASYKIFKMEKGKVVKSVELDAPNYHYEECSCYPDAGEITCVCRDNWHGSNRPWVSFNQNLEYQIGYICSGVFGDNPRPNDGTGSCGPMSPNGAYGVKGFSFKYGNGVWIGRTKSTNSRSGFEMIWDPNGWTGTDSSFSVKQDIVAITDWSGYSGSFVQHPELTGLDCIRPCFWVELIRGRPKERTIWTSGSSISFCGVNSDTVAWSWPDGAELPFTIDK.

The Intravirion portion of the chain corresponds to 1 to 6; sequence MNPNQK. A helical transmembrane segment spans residues 7–27; that stretch reads IITIGSICMVIGIVSLMLQIG. The tract at residues 11–33 is involved in apical transport and lipid raft association; that stretch reads GSICMVIGIVSLMLQIGNIISIW. Topologically, residues 28 to 449 are virion surface; sequence NIISIWVSHS…GAELPFTIDK (422 aa). The tract at residues 36-70 is hypervariable stalk region; sequence HSIQTGNQHQAEPISNTNFLTEKAVASVTLAGNSS. Asparagine 68 carries an N-linked (GlcNAc...) asparagine; by host glycan. The head of neuraminidase stretch occupies residues 71 to 449; sequence LCPISGWAVH…GAELPFTIDK (379 aa). Disulfide bonds link cysteine 72–cysteine 397, cysteine 104–cysteine 109, cysteine 164–cysteine 211, cysteine 213–cysteine 218, cysteine 259–cysteine 272, cysteine 261–cysteine 270, cysteine 298–cysteine 315, and cysteine 401–cysteine 426. Arginine 98 contributes to the substrate binding site. Residue asparagine 126 is glycosylated (N-linked (GlcNAc...) asparagine; by host). The active-site Proton donor/acceptor is the aspartate 131. Residue arginine 132 coordinates substrate. A glycan (N-linked (GlcNAc...) asparagine; by host) is linked at asparagine 215. 257-258 contacts substrate; the sequence is EE. Substrate is bound at residue arginine 273. Positions 274, 278, and 304 each coordinate Ca(2+). Arginine 348 serves as a coordination point for substrate. Tyrosine 382 acts as the Nucleophile in catalysis.

The protein belongs to the glycosyl hydrolase 34 family. Homotetramer. The cofactor is Ca(2+). In terms of processing, N-glycosylated.

Its subcellular location is the virion membrane. It is found in the host apical cell membrane. It carries out the reaction Hydrolysis of alpha-(2-&gt;3)-, alpha-(2-&gt;6)-, alpha-(2-&gt;8)- glycosidic linkages of terminal sialic acid residues in oligosaccharides, glycoproteins, glycolipids, colominic acid and synthetic substrates.. Its activity is regulated as follows. Inhibited by the neuraminidase inhibitors zanamivir (Relenza) and oseltamivir (Tamiflu). These drugs interfere with the release of progeny virus from infected cells and are effective against all influenza strains. Resistance to neuraminidase inhibitors is quite rare. Functionally, catalyzes the removal of terminal sialic acid residues from viral and cellular glycoconjugates. Cleaves off the terminal sialic acids on the glycosylated HA during virus budding to facilitate virus release. Additionally helps virus spread through the circulation by further removing sialic acids from the cell surface. These cleavages prevent self-aggregation and ensure the efficient spread of the progeny virus from cell to cell. Otherwise, infection would be limited to one round of replication. Described as a receptor-destroying enzyme because it cleaves a terminal sialic acid from the cellular receptors. May facilitate viral invasion of the upper airways by cleaving the sialic acid moieties on the mucin of the airway epithelial cells. Likely to plays a role in the budding process through its association with lipid rafts during intracellular transport. May additionally display a raft-association independent effect on budding. Plays a role in the determination of host range restriction on replication and virulence. Sialidase activity in late endosome/lysosome traffic seems to enhance virus replication. The polypeptide is Neuraminidase (Aves (Cat)).